A 389-amino-acid chain; its full sequence is GDSL esterase/lipase At1g28570 (389 aa).

Residues 1 to 25 (MATLFMKLVSFFLILSTFCLTTVNS) form the signal peptide. The Nucleophile role is filled by Ser-41. N-linked (GlcNAc...) asparagine glycosylation is found at Asn-137 and Asn-319. Active-site residues include Asp-344 and His-347.

The protein belongs to the 'GDSL' lipolytic enzyme family.

Its subcellular location is the secreted. In Arabidopsis thaliana (Mouse-ear cress), this protein is GDSL esterase/lipase At1g28570.